The following is a 542-amino-acid chain: Anaerobic glycerol-3-phosphate dehydrogenase subunit A (542 aa).

10-38 is a binding site for FAD; sequence DVIIIGGGATGAGIARDCALRGLRVILVE.

Belongs to the FAD-dependent glycerol-3-phosphate dehydrogenase family. As to quaternary structure, composed of a catalytic GlpA/B dimer and of membrane bound GlpC. Requires FAD as cofactor. FMN serves as cofactor.

Its subcellular location is the cell inner membrane. The catalysed reaction is a quinone + sn-glycerol 3-phosphate = dihydroxyacetone phosphate + a quinol. Its pathway is polyol metabolism; glycerol degradation via glycerol kinase pathway; glycerone phosphate from sn-glycerol 3-phosphate (anaerobic route): step 1/1. Functionally, conversion of glycerol 3-phosphate to dihydroxyacetone. Uses fumarate or nitrate as electron acceptor. The polypeptide is Anaerobic glycerol-3-phosphate dehydrogenase subunit A (glpA) (Escherichia coli O157:H7).